Consider the following 177-residue polypeptide: Large ribosomal subunit protein uL6 (177 aa).

This sequence belongs to the universal ribosomal protein uL6 family. In terms of assembly, part of the 50S ribosomal subunit.

This protein binds to the 23S rRNA, and is important in its secondary structure. It is located near the subunit interface in the base of the L7/L12 stalk, and near the tRNA binding site of the peptidyltransferase center. The chain is Large ribosomal subunit protein uL6 from Bartonella henselae (strain ATCC 49882 / DSM 28221 / CCUG 30454 / Houston 1) (Rochalimaea henselae).